The sequence spans 462 residues: Probable DNA-directed RNA polymerase subunit 343L (462 aa).

It belongs to the RNA polymerase beta' chain family.

The catalysed reaction is RNA(n) + a ribonucleoside 5'-triphosphate = RNA(n+1) + diphosphate. Its function is as follows. Component of the DNA-dependent RNA polymerase that catalyzes the transcription in the cytoplasm of viral DNA into RNA using the four ribonucleoside triphosphates as substrates. This Acheta domesticus (House cricket) protein is Probable DNA-directed RNA polymerase subunit 343L.